Here is a 230-residue protein sequence, read N- to C-terminus: V-type proton ATPase subunit E1 (230 aa).

N-acetylmethionine is present on M1. Residues 8–67 (RQIQQMVRFIRQEAEEKANEISVSAEEEFNIEKLQLVEAEKKKIRQDYEKKEKQADVRKK) are a coiled coil. Phosphoserine is present on S178.

The protein belongs to the V-ATPase E subunit family. In terms of assembly, V-ATPase is a heteromultimeric enzyme composed of a peripheral catalytic V1 complex (components A to H) attached to an integral membrane V0 proton pore complex (components: a, c, c'', d and e).

The protein localises to the vacuole membrane. Subunit of the peripheral V1 complex of vacuolar ATPase essential for assembly or catalytic function. V-ATPase is responsible for acidifying a variety of intracellular compartments in eukaryotic cells. Required for Golgi organization and vacuole function in embryogenesis. This is V-type proton ATPase subunit E1 (VHA-E1) from Arabidopsis thaliana (Mouse-ear cress).